An 868-amino-acid polypeptide reads, in one-letter code: Facilitated trehalose transporter Tret1 (868 aa).

Disordered regions lie at residues 1 to 213 and 257 to 314; these read MSGR…QKAT and KESS…LIHR. At 1 to 403 the chain is on the cytoplasmic side; the sequence is MSGRDNRGAG…VYRPTTNPIY (403 aa). Residues 25–43 show a composition bias toward basic and acidic residues; it reads KLKEKLTRAGDDQGYHRVE. Composition is skewed to low complexity over residues 44–57, 79–91, and 117–126; these read SNLSTSNTATSLDT, PQQQQQQQRQQLR, and PFQQQQQRTP. Basic and acidic residues-rich tracts occupy residues 146 to 155 and 257 to 290; these read EIREHRDRQQ and KESSSEEEFHKTRREFQGRKHQSLDPRVTFKLDK. A phosphoserine mark is found at S259, S260, S261, S331, and S333. The segment at 335–367 is disordered; it reads EDFHTSRQHFQQQRSISTDSRKSRRPYEMDEMG. Over residues 342-352 the composition is skewed to polar residues; it reads QHFQQQRSIST. Residues 353–367 show a composition bias toward basic and acidic residues; that stretch reads DSRKSRRPYEMDEMG. The chain crosses the membrane as a helical span at residues 404–424; it reads IWTQVLAALSVSLGSLVVGFV. Residues 425 to 451 lie on the Extracellular side of the membrane; it reads SAYTSPALVSMTNRNMTSFEVTPQAAS. N439 carries N-linked (GlcNAc...) asparagine glycosylation. The helical transmembrane segment at 452-472 threads the bilayer; the sequence is WVGGIMPLAGLAGGIAGGPFI. Residues 473–484 are Cytoplasmic-facing; the sequence is EYLGRRNTILAT. A helical transmembrane segment spans residues 485 to 505; sequence AIPFIVSSLLIACAVNVAMVL. Residues 506 to 508 are Extracellular-facing; that stretch reads AGR. The chain crosses the membrane as a helical span at residues 509–529; it reads FLAGFCVGIASLSLPVYLGET. The Cytoplasmic portion of the chain corresponds to 530–535; that stretch reads VQPEVR. Residues 536-556 form a helical membrane-spanning segment; sequence GTLGLLPTAFGNIGILLCFVA. At 557-563 the chain is on the extracellular side; sequence GTYMDWS. A helical membrane pass occupies residues 564 to 584; sequence MLAFLGAALPVPFLILMFLIP. Residues 585-653 are Cytoplasmic-facing; it reads ETPRWFVSRG…NLKPLSISLG (69 aa). The chain crosses the membrane as a helical span at residues 654 to 674; that stretch reads LMFFQQLSGINAVIFYTVSIF. Over 675 to 684 the chain is Extracellular; sequence KDAGSTIDGN. The chain crosses the membrane as a helical span at residues 685–705; sequence LCTIIVGIVNFMATFIATLLI. Residues 706-711 are Cytoplasmic-facing; sequence DRAGRK. A helical membrane pass occupies residues 712–732; that stretch reads ILLYVSNIAMIITLFVLGGFF. The Extracellular portion of the chain corresponds to 733-751; it reads YCKSHGQDVSQLGWLPLSC. A helical transmembrane segment spans residues 752 to 772; it reads FVIYILGFSLGFGPIPWLMMG. The Cytoplasmic portion of the chain corresponds to 773 to 778; the sequence is EILPSK. A helical transmembrane segment spans residues 779 to 799; the sequence is IRGSAASVATAFNWSCTFVVT. Residues 800–812 are Extracellular-facing; it reads KTFQDMIDFMGAH. The chain crosses the membrane as a helical span at residues 813 to 833; it reads GAFWLFGSICFIGLFFVILYV. Topologically, residues 834–868 are cytoplasmic; sequence PETQGKTLEDIERKMMGRVRRMSSVANMKPLAFNM. S856 and S857 each carry phosphoserine.

It belongs to the major facilitator superfamily. Sugar transporter (TC 2.A.1.1) family. Trehalose transporter subfamily.

The protein localises to the cell membrane. Functionally, low-capacity facilitative transporter for trehalose. Does not transport maltose, sucrose or lactose. Mediates the bidirectional transfer of trehalose. Responsible for the transport of trehalose synthesized in the fat body and the incorporation of trehalose into other tissues that require a carbon source, thereby regulating trehalose levels in the hemolymph. The sequence is that of Facilitated trehalose transporter Tret1 from Drosophila pseudoobscura pseudoobscura (Fruit fly).